A 567-amino-acid chain; its full sequence is Mitogen-activated protein kinase 16 (567 aa).

A Protein kinase domain is found at 25–316 (YRIEEVIGKG…AEEALADVYF (292 aa)). Residues 31 to 39 (IGKGSYGVV) and K54 contribute to the ATP site. D151 serves as the catalytic Proton acceptor. T187 is subject to Phosphothreonine. Residues 187-189 (TDY) carry the TXY motif. Y189 carries the post-translational modification Phosphotyrosine. T192 carries the post-translational modification Phosphothreonine. Disordered stretches follow at residues 428-455 (AQQS…ADRN) and 512-567 (PAAA…SRWY). Over residues 443-453 (SIRDERPRGAD) the composition is skewed to basic and acidic residues. A compositionally biased stretch (polar residues) spans 545–567 (KPNTQYIPQKVSAAQDTAMSRWY).

Belongs to the protein kinase superfamily. CMGC Ser/Thr protein kinase family. MAP kinase subfamily. In terms of processing, dually phosphorylated on Thr-187 and Tyr-189, which activates the enzyme.

It catalyses the reaction L-seryl-[protein] + ATP = O-phospho-L-seryl-[protein] + ADP + H(+). It carries out the reaction L-threonyl-[protein] + ATP = O-phospho-L-threonyl-[protein] + ADP + H(+). With respect to regulation, activated by threonine and tyrosine phosphorylation. This Arabidopsis thaliana (Mouse-ear cress) protein is Mitogen-activated protein kinase 16 (MPK16).